The chain runs to 762 residues: 1-phosphatidylinositol 4,5-bisphosphate phosphodiesterase delta-4 (762 aa).

Positions 16 to 124 constitute a PH domain; that stretch reads LLMQEGMPMR…WMRGLQLLVD (109 aa). The substrate binding stretch occupies residues 26–53; it reads KVRSKSWKKLRYFRLQNDGMTVWHARQA. 3 EF-hand domains span residues 134-169, 170-205, and 206-237; these read RLDQ…MNVE, MDQE…LTKR, and AEVQ…EQKE. 10 residues coordinate Ca(2+): D147, N149, D151, K153, E158, D183, S185, S187, T189, and E194. A GBA motif is present at residues 213-243; that stretch reads ESFSADGQKLTLLEFLDFLQEEQKERDCTSE. One can recognise a PI-PLC X-box domain in the interval 290–435; the sequence is QDMTQPLNHY…LRRKILVKGK (146 aa). H305 is an active-site residue. Residues N306, E335, and D337 each contribute to the Ca(2+) site. Residue H350 is part of the active site. E384 serves as a coordination point for Ca(2+). Residues K433 and K435 each coordinate substrate. The segment covering 443–471 has biased composition (acidic residues); it reads LEYEEEEAEPELEESELALESQFETEPEP. Residues 443–483 are disordered; sequence LEYEEEEAEPELEESELALESQFETEPEPQEQNLQNKDKKK. Residue S457 is modified to Phosphoserine. In terms of domain architecture, PI-PLC Y-box spans 493–609; the sequence is LSSLVIYLKS…GYVLKPDFLR (117 aa). Positions 522 and 549 each coordinate substrate. In terms of domain architecture, C2 spans 609–736; sequence RDIQSSFHPE…QGYRHIHLLS (128 aa). Positions 650, 652, 676, 705, 706, and 707 each coordinate Ca(2+). Positions 731 to 734 match the PDZ-binding motif; the sequence is HIHL.

Interacts with GRIP1. As to quaternary structure, interacts (via GBA motif) with guanine nucleotide-binding protein G(i) alpha subunit GNAI3 (inactive GDP-bound form); high-affinity interaction. In terms of assembly, interacts (via GBA motif) with guanine nucleotide-binding protein G(i) alpha subunit GNAI3 (inactive GDP-bound form); low-affinity interaction. Ca(2+) is required as a cofactor. In terms of tissue distribution, highly expressed in skeletal muscle and kidney tissues, and at moderate level in intestinal tissue. Expressed in corneal epithelial cells.

Its subcellular location is the membrane. It localises to the nucleus. The protein localises to the cytoplasm. The protein resides in the endoplasmic reticulum. The catalysed reaction is a 1,2-diacyl-sn-glycero-3-phospho-(1D-myo-inositol-4,5-bisphosphate) + H2O = 1D-myo-inositol 1,4,5-trisphosphate + a 1,2-diacyl-sn-glycerol + H(+). It carries out the reaction a 1,2-diacyl-sn-glycero-3-phospho-(1D-myo-inositol) + H2O = 1D-myo-inositol 1-phosphate + a 1,2-diacyl-sn-glycerol + H(+). Its function is as follows. Hydrolyzes the phosphatidylinositol 4,5-bisphosphate (PIP2) to generate 2 second messenger molecules diacylglycerol (DAG) and inositol 1,4,5-trisphosphate (IP3). DAG mediates the activation of protein kinase C (PKC), while IP3 releases Ca(2+) from intracellular stores. Required for acrosome reaction in sperm during fertilization, probably by acting as an important enzyme for intracellular Ca(2+) mobilization in the zona pellucida-induced acrosome reaction. May play a role in cell growth. Modulates the liver regeneration in cooperation with nuclear PKC. Overexpression up-regulates the Erk signaling pathway and proliferation. In terms of biological role, acts as a non-receptor guanine nucleotide exchange factor which binds to and activates guanine nucleotide-binding protein (G-protein) alpha subunit GNAI3. The polypeptide is 1-phosphatidylinositol 4,5-bisphosphate phosphodiesterase delta-4 (Homo sapiens (Human)).